An 85-amino-acid chain; its full sequence is Small integral membrane protein 2 (85 aa).

A helical transmembrane segment spans residues 21 to 43 (GHAISILFGFWTSFICDTYIVLA). Residues 51 to 85 (SPDVSASSDEPYARIQQSRRQCHAEEDQSQVPEAG) are disordered.

The protein localises to the membrane. The protein is Small integral membrane protein 2 (SMIM2) of Homo sapiens (Human).